We begin with the raw amino-acid sequence, 457 residues long: Paired box protein Pax-8 (457 aa).

Residues 9–135 (GHGGLNQLGG…SSINRIIRTK (127 aa)) constitute a DNA-binding region (paired). Positions 12–68 (GLNQLGGAFVNGRPLPEVVRQRIVDLAHQGVRPCDISRQLRVSHGCVSKILGRYYET) are PAI subdomain. The tract at residues 87–135 (KVVEKIGDYKRQNPTMFAWEIRDRLLAEGVCDNDTVPSVSSINRIIRTK) is RED subdomain. Residues 159 to 182 (LIPSSAVTPPESPQSDSLGSTYSI) are compositionally biased toward polar residues. The tract at residues 159–224 (LIPSSAVTPP…SSSSGPRKHL (66 aa)) is disordered. Position 304 is a phosphoserine (Ser-304).

Interacts with WWTR1. Expressed in the developing excretory system and the thyroid gland.

It localises to the nucleus. In terms of biological role, thought to encode a transcription factor. It may have a role in kidney cell differentiation. May play a regulatory role in mammalian development. The sequence is that of Paired box protein Pax-8 (Pax8) from Mus musculus (Mouse).